The sequence spans 244 residues: Ribosomal RNA small subunit methyltransferase G (244 aa).

S-adenosyl-L-methionine contacts are provided by residues Gly84, Phe89, 107 to 109 (DST), 135 to 136 (AE), and Arg154.

This sequence belongs to the methyltransferase superfamily. RNA methyltransferase RsmG family.

It is found in the cytoplasm. Its function is as follows. Specifically methylates the N7 position of a guanine in 16S rRNA. The sequence is that of Ribosomal RNA small subunit methyltransferase G from Nostoc punctiforme (strain ATCC 29133 / PCC 73102).